A 398-amino-acid chain; its full sequence is uncharacterized protein (398 aa).

This sequence belongs to the glycosyltransferase 2 family.

This is an uncharacterized protein from Escherichia coli (strain K12).